Consider the following 243-residue polypeptide: MIPESHPRYKSLITREKLAQYTKTGIVSLEGLTAHGRGEAFDYLLGEETTESALRAEKIAAALLLSANHPVISVNGNTAALAAKEIAQLQLASKARVEVNLFHRTDERVQAISGLLKEHGITLVEGTVSRYIPLDHDRGLCHFDGMHSADVVLVPLEDGDRAQALIDLGKKVIAIDLNPLSRTSKVATVPVIDEVTRALANIARFCTELDQDEITGLTREIHGTGFIRDALEYIRERLLNVLD.

ATP-binding positions include Arg15, Arg37, Asp176–Asn178, and Arg182–Thr183.

The protein belongs to the archaeal phosphopantothenate synthetase family. Homodimer.

The catalysed reaction is (R)-4-phosphopantoate + beta-alanine + ATP = (R)-4'-phosphopantothenate + AMP + diphosphate + H(+). The protein operates within cofactor biosynthesis; coenzyme A biosynthesis. Its function is as follows. Catalyzes the condensation of (R)-4-phosphopantoate and beta-alanine to 4'-phosphopantothenate in the CoA biosynthesis pathway. This Methanospirillum hungatei JF-1 (strain ATCC 27890 / DSM 864 / NBRC 100397 / JF-1) protein is 4-phosphopantoate--beta-alanine ligase.